A 171-amino-acid chain; its full sequence is Adenine phosphoribosyltransferase (171 aa).

This sequence belongs to the purine/pyrimidine phosphoribosyltransferase family. Homodimer.

It is found in the cytoplasm. The catalysed reaction is AMP + diphosphate = 5-phospho-alpha-D-ribose 1-diphosphate + adenine. It functions in the pathway purine metabolism; AMP biosynthesis via salvage pathway; AMP from adenine: step 1/1. Catalyzes a salvage reaction resulting in the formation of AMP, that is energically less costly than de novo synthesis. The protein is Adenine phosphoribosyltransferase of Halalkalibacterium halodurans (strain ATCC BAA-125 / DSM 18197 / FERM 7344 / JCM 9153 / C-125) (Bacillus halodurans).